Consider the following 113-residue polypeptide: Nucleoid-associated protein RHA1_ro04210 (113 aa).

Belongs to the YbaB/EbfC family. In terms of assembly, homodimer.

It is found in the cytoplasm. It localises to the nucleoid. In terms of biological role, binds to DNA and alters its conformation. May be involved in regulation of gene expression, nucleoid organization and DNA protection. The chain is Nucleoid-associated protein RHA1_ro04210 from Rhodococcus jostii (strain RHA1).